A 280-amino-acid polypeptide reads, in one-letter code: Cis-2,3-dihydrobiphenyl-2,3-diol dehydrogenase (280 aa).

9 to 33 provides a ligand contact to NAD(+); the sequence is LVTGGCAGLGRAIVDRFVCEGARVA. Residue Ser142 participates in substrate binding. The Proton acceptor role is filled by Tyr155.

The protein belongs to the short-chain dehydrogenases/reductases (SDR) family.

The catalysed reaction is (2R,3S)-3-phenylcyclohexa-3,5-diene-1,2-diol + NAD(+) = biphenyl-2,3-diol + NADH + H(+). The protein operates within xenobiotic degradation; biphenyl degradation; 2-hydroxy-2,4-pentadienoate and benzoate from biphenyl: step 2/4. The sequence is that of Cis-2,3-dihydrobiphenyl-2,3-diol dehydrogenase (bphB) from Rhodococcus globerulus.